The chain runs to 115 residues: Tyrosine-protein phosphatase 19 (115 aa).

Residues 1–115 (WLMIVEQKCR…ETGSDAPMVV (115 aa)) form the Tyrosine-protein phosphatase domain. D83 serves as a coordination point for substrate.

The protein belongs to the protein-tyrosine phosphatase family.

The enzyme catalyses O-phospho-L-tyrosyl-[protein] + H2O = L-tyrosyl-[protein] + phosphate. The protein is Tyrosine-protein phosphatase 19 (STY-19) of Styela plicata (Wrinkled sea squirt).